The following is a 498-amino-acid chain: NAD(P)H-quinone oxidoreductase chain 4, chloroplastic (498 aa).

Helical transmembrane passes span Phe-4 to Phe-24, Tyr-37 to Leu-57, Phe-80 to Ala-100, Lys-112 to Phe-129, Ile-134 to Met-154, Phe-167 to Leu-187, Ala-208 to Ile-228, His-242 to Val-262, Ala-272 to Ala-292, Ile-305 to Glu-325, Gly-330 to Gly-350, Leu-386 to Thr-406, Ile-416 to Ile-436, and Phe-463 to Phe-483.

The protein belongs to the complex I subunit 4 family.

The protein localises to the plastid. It localises to the chloroplast thylakoid membrane. The enzyme catalyses a plastoquinone + NADH + (n+1) H(+)(in) = a plastoquinol + NAD(+) + n H(+)(out). It catalyses the reaction a plastoquinone + NADPH + (n+1) H(+)(in) = a plastoquinol + NADP(+) + n H(+)(out). The protein is NAD(P)H-quinone oxidoreductase chain 4, chloroplastic of Phaseolus vulgaris (Kidney bean).